Here is a 183-residue protein sequence, read N- to C-terminus: Translation initiation factor IF-3 (183 aa).

This sequence belongs to the IF-3 family. Monomer.

It localises to the cytoplasm. In terms of biological role, IF-3 binds to the 30S ribosomal subunit and shifts the equilibrium between 70S ribosomes and their 50S and 30S subunits in favor of the free subunits, thus enhancing the availability of 30S subunits on which protein synthesis initiation begins. This is Translation initiation factor IF-3 from Pseudomonas entomophila (strain L48).